Here is a 270-residue protein sequence, read N- to C-terminus: 3-phenylpropionate-dihydrodiol/cinnamic acid-dihydrodiol dehydrogenase (270 aa).

Position 10-34 (10-34 (FITGGGSGLGLALVERFIEEGAQVA)) interacts with NAD(+). Ser143 provides a ligand contact to substrate. Catalysis depends on Tyr156, which acts as the Proton acceptor.

Belongs to the short-chain dehydrogenases/reductases (SDR) family.

The enzyme catalyses 3-(cis-5,6-dihydroxycyclohexa-1,3-dien-1-yl)propanoate + NAD(+) = 3-(2,3-dihydroxyphenyl)propanoate + NADH + H(+). It carries out the reaction (2E)-3-(cis-5,6-dihydroxycyclohexa-1,3-dien-1-yl)prop-2-enoate + NAD(+) = (2E)-3-(2,3-dihydroxyphenyl)prop-2-enoate + NADH + H(+). Its pathway is aromatic compound metabolism; 3-phenylpropanoate degradation. Its function is as follows. Converts 3-phenylpropionate-dihydrodiol (PP-dihydrodiol) and cinnamic acid-dihydrodiol (CI-dihydrodiol) into 3-(2,3-dihydroxylphenyl)propanoic acid (DHPP) and 2,3-dihydroxicinnamic acid (DHCI), respectively. The polypeptide is 3-phenylpropionate-dihydrodiol/cinnamic acid-dihydrodiol dehydrogenase (Escherichia coli O7:K1 (strain IAI39 / ExPEC)).